Here is a 177-residue protein sequence, read N- to C-terminus: ATP synthase subunit delta (177 aa).

The protein belongs to the ATPase delta chain family. As to quaternary structure, F-type ATPases have 2 components, F(1) - the catalytic core - and F(0) - the membrane proton channel. F(1) has five subunits: alpha(3), beta(3), gamma(1), delta(1), epsilon(1). F(0) has three main subunits: a(1), b(2) and c(10-14). The alpha and beta chains form an alternating ring which encloses part of the gamma chain. F(1) is attached to F(0) by a central stalk formed by the gamma and epsilon chains, while a peripheral stalk is formed by the delta and b chains.

The protein resides in the cell inner membrane. Functionally, f(1)F(0) ATP synthase produces ATP from ADP in the presence of a proton or sodium gradient. F-type ATPases consist of two structural domains, F(1) containing the extramembraneous catalytic core and F(0) containing the membrane proton channel, linked together by a central stalk and a peripheral stalk. During catalysis, ATP synthesis in the catalytic domain of F(1) is coupled via a rotary mechanism of the central stalk subunits to proton translocation. In terms of biological role, this protein is part of the stalk that links CF(0) to CF(1). It either transmits conformational changes from CF(0) to CF(1) or is implicated in proton conduction. This is ATP synthase subunit delta from Photorhabdus laumondii subsp. laumondii (strain DSM 15139 / CIP 105565 / TT01) (Photorhabdus luminescens subsp. laumondii).